We begin with the raw amino-acid sequence, 102 residues long: uncharacterized protein (102 aa).

A disordered region spans residues methionine 1–threonine 71. The Extracellular segment spans residues methionine 1–aspartate 79. Over residues serine 56 to threonine 71 the composition is skewed to polar residues. Asparagine 65 carries an N-linked (GlcNAc...) asparagine; by host glycan. Residues isoleucine 80–methionine 97 form a helical membrane-spanning segment. Topologically, residues arginine 98 to glutamine 102 are cytoplasmic.

It belongs to the HHV-5 UL15A protein family.

It is found in the host membrane. This is an uncharacterized protein from Human cytomegalovirus (strain AD169) (HHV-5).